A 404-amino-acid chain; its full sequence is CCA-adding enzyme (404 aa).

Positions 27 and 30 each coordinate ATP. Residues Gly-27 and Arg-30 each contribute to the CTP site. Mg(2+) contacts are provided by Asp-40 and Asp-42. The ATP site is built by Arg-111, Asp-154, Arg-157, Arg-160, and Arg-163. The CTP site is built by Arg-111, Asp-154, Arg-157, Arg-160, and Arg-163.

This sequence belongs to the tRNA nucleotidyltransferase/poly(A) polymerase family. Bacterial CCA-adding enzyme type 3 subfamily. In terms of assembly, homodimer. Requires Mg(2+) as cofactor.

It carries out the reaction a tRNA precursor + 2 CTP + ATP = a tRNA with a 3' CCA end + 3 diphosphate. It catalyses the reaction a tRNA with a 3' CCA end + 2 CTP + ATP = a tRNA with a 3' CCACCA end + 3 diphosphate. Its function is as follows. Catalyzes the addition and repair of the essential 3'-terminal CCA sequence in tRNAs without using a nucleic acid template. Adds these three nucleotides in the order of C, C, and A to the tRNA nucleotide-73, using CTP and ATP as substrates and producing inorganic pyrophosphate. tRNA 3'-terminal CCA addition is required both for tRNA processing and repair. Also involved in tRNA surveillance by mediating tandem CCA addition to generate a CCACCA at the 3' terminus of unstable tRNAs. While stable tRNAs receive only 3'-terminal CCA, unstable tRNAs are marked with CCACCA and rapidly degraded. The structural flexibility of RNA controls the choice between CCA versus CCACCA addition: following the first CCA addition cycle, nucleotide-binding to the active site triggers a clockwise screw motion, producing torque on the RNA. This ejects stable RNAs, whereas unstable RNAs are refolded while bound to the enzyme and subjected to a second CCA catalytic cycle. This chain is CCA-adding enzyme, found in Geobacillus stearothermophilus (Bacillus stearothermophilus).